Here is a 204-residue protein sequence, read N- to C-terminus: Large ribosomal subunit protein uL4 (204 aa).

Residues 49 to 72 form a disordered region; sequence QKNRAAVSGGGKKPWRQKGTGRAR.

It belongs to the universal ribosomal protein uL4 family. In terms of assembly, part of the 50S ribosomal subunit.

Its function is as follows. One of the primary rRNA binding proteins, this protein initially binds near the 5'-end of the 23S rRNA. It is important during the early stages of 50S assembly. It makes multiple contacts with different domains of the 23S rRNA in the assembled 50S subunit and ribosome. In terms of biological role, forms part of the polypeptide exit tunnel. This Saccharophagus degradans (strain 2-40 / ATCC 43961 / DSM 17024) protein is Large ribosomal subunit protein uL4.